Here is a 108-residue protein sequence, read N- to C-terminus: Ig kappa chain V-V region MOPC 149 (108 aa).

Residues 1–23 (DIQMTQSPDYLSASVGETVTITC) form a framework-1 region. The cysteines at positions 23 and 88 are disulfide-linked. A complementarity-determining-1 region spans residues 24–34 (RASENIYSYLA). Positions 35-49 (WYQQKQGKSPQLLVY) are framework-2. Residues 50–56 (DAKTLVE) form a complementarity-determining-2 region. Positions 57–88 (GVPSRFSGSGSGTQFSLKINSLQPEDFGSYYC) are framework-3. The tract at residues 89-97 (QHHYGIPFT) is complementarity-determining-3. The tract at residues 98–108 (FGSGTKLEIKR) is framework-4.

This chain is Ig kappa chain V-V region MOPC 149, found in Mus musculus (Mouse).